Consider the following 263-residue polypeptide: Endonuclease 8 (263 aa).

The active-site Schiff-base intermediate with DNA is the Pro-2. Glu-3 serves as the catalytic Proton donor. Residue Lys-53 is the Proton donor; for beta-elimination activity of the active site. 3 residues coordinate DNA: Gln-70, Arg-125, and Asn-169. The FPG-type zinc finger occupies Lys-229–His-263. The Proton donor; for delta-elimination activity role is filled by Arg-253.

Belongs to the FPG family. Requires Zn(2+) as cofactor.

It carries out the reaction 2'-deoxyribonucleotide-(2'-deoxyribose 5'-phosphate)-2'-deoxyribonucleotide-DNA = a 3'-end 2'-deoxyribonucleotide-(2,3-dehydro-2,3-deoxyribose 5'-phosphate)-DNA + a 5'-end 5'-phospho-2'-deoxyribonucleoside-DNA + H(+). In terms of biological role, involved in base excision repair of DNA damaged by oxidation or by mutagenic agents. Acts as a DNA glycosylase that recognizes and removes damaged bases. Has a preference for oxidized pyrimidines, such as thymine glycol, 5,6-dihydrouracil and 5,6-dihydrothymine. Has AP (apurinic/apyrimidinic) lyase activity and introduces nicks in the DNA strand. Cleaves the DNA backbone by beta-delta elimination to generate a single-strand break at the site of the removed base with both 3'- and 5'-phosphates. The chain is Endonuclease 8 from Escherichia coli O157:H7.